Reading from the N-terminus, the 398-residue chain is MVDTEMQEQDVTFGALVETKYLEEEPLEPENDHNPSEIPQPLLLGDGQANNGHGMNGGAVGVVDHSERKTRRVQMLSPKTEGENAKKRKTWLLDSEAQGTDEAGTPVEQVAFLREVEAFYKESFLEFKPPKFYGQPLNILKLWRAVVNLGGYEVVTTNKLWRQVGESFNPPKTCTTVSYTFRNFYEKALLEYEKCLRNNGELNLPGSTLILSSSVEKEPSSHQGSGSGRARRDSAARAMQGWHAQRLVGSGEVTAPAVKDKGLISTPKHKKLKSIGLQKHKQQTSMDHVVTNEADKQLAAEVVDVGPVADWVKINVKESKDSFEIFALVPGLLRKEVRIQSDPAGKVVITGQPEQLDNPWGITPFKKIVDLSARIDPLHTSAVMSMHGRLFIRVPFEQ.

Residues Glu-25–Lys-87 are disordered. The region spanning Pro-106–Arg-197 is the ARID domain. Positions Ser-213 to Ala-236 are disordered. The sHSP domain occupies Val-305–Gln-398.

Belongs to the small heat shock protein (HSP20) family.

Its subcellular location is the nucleus. The protein is AT-rich interactive domain-containing protein 6 (ARID6) of Arabidopsis thaliana (Mouse-ear cress).